Reading from the N-terminus, the 372-residue chain is Flagellar P-ring protein (372 aa).

Residues 1–26 (MNLSSLSFRLLATLLGACVVVAPASA) form the signal peptide.

The protein belongs to the FlgI family. In terms of assembly, the basal body constitutes a major portion of the flagellar organelle and consists of four rings (L,P,S, and M) mounted on a central rod.

The protein resides in the periplasm. The protein localises to the bacterial flagellum basal body. Its function is as follows. Assembles around the rod to form the L-ring and probably protects the motor/basal body from shearing forces during rotation. This is Flagellar P-ring protein from Xanthomonas oryzae pv. oryzae (strain MAFF 311018).